Consider the following 856-residue polypeptide: DNA mismatch repair protein MutS (856 aa).

Residue 600-607 participates in ATP binding; sequence GPNMSGKS.

The protein belongs to the DNA mismatch repair MutS family.

Its function is as follows. This protein is involved in the repair of mismatches in DNA. It is possible that it carries out the mismatch recognition step. This protein has a weak ATPase activity. The chain is DNA mismatch repair protein MutS from Lactobacillus acidophilus (strain ATCC 700396 / NCK56 / N2 / NCFM).